The following is a 1370-amino-acid chain: DNA-directed RNA polymerase subunit beta (1370 aa).

It belongs to the RNA polymerase beta chain family. In terms of assembly, the RNAP catalytic core consists of 2 alpha, 1 beta, 1 beta' and 1 omega subunit. When a sigma factor is associated with the core the holoenzyme is formed, which can initiate transcription.

The enzyme catalyses RNA(n) + a ribonucleoside 5'-triphosphate = RNA(n+1) + diphosphate. DNA-dependent RNA polymerase catalyzes the transcription of DNA into RNA using the four ribonucleoside triphosphates as substrates. The sequence is that of DNA-directed RNA polymerase subunit beta from Polaromonas naphthalenivorans (strain CJ2).